Reading from the N-terminus, the 129-residue chain is Small ribosomal subunit protein uS11 (129 aa).

It belongs to the universal ribosomal protein uS11 family. In terms of assembly, part of the 30S ribosomal subunit. Interacts with proteins S7 and S18. Binds to IF-3.

Located on the platform of the 30S subunit, it bridges several disparate RNA helices of the 16S rRNA. Forms part of the Shine-Dalgarno cleft in the 70S ribosome. This is Small ribosomal subunit protein uS11 from Sodalis glossinidius (strain morsitans).